The chain runs to 60 residues: UPF0434 protein PC1_1771 (60 aa).

It belongs to the UPF0434 family.

This Pectobacterium carotovorum subsp. carotovorum (strain PC1) protein is UPF0434 protein PC1_1771.